We begin with the raw amino-acid sequence, 299 residues long: Sulfate adenylyltransferase subunit 2 (299 aa).

Belongs to the PAPS reductase family. CysD subfamily. As to quaternary structure, sulfate-activating enzymes, NodP and NodQ, may be physically associated.

It carries out the reaction sulfate + ATP + H(+) = adenosine 5'-phosphosulfate + diphosphate. Its function is as follows. Proposed to provide activated sulfate for transfer to nod factor. This chain is Sulfate adenylyltransferase subunit 2 (nodP), found in Rhizobium meliloti (strain 1021) (Ensifer meliloti).